Consider the following 341-residue polypeptide: NADH-quinone oxidoreductase subunit H 1 (341 aa).

Helical transmembrane passes span Ile-7 to Leu-27, Pro-46 to Phe-66, Phe-80 to Phe-100, Val-111 to Gly-131, Leu-157 to Val-177, Ala-183 to Ile-203, Tyr-244 to Ser-264, Val-273 to Ile-293, and Ile-305 to Ala-325.

Belongs to the complex I subunit 1 family. In terms of assembly, NDH-1 is composed of 14 different subunits. Subunits NuoA, H, J, K, L, M, N constitute the membrane sector of the complex.

It localises to the cell inner membrane. It carries out the reaction a quinone + NADH + 5 H(+)(in) = a quinol + NAD(+) + 4 H(+)(out). Functionally, NDH-1 shuttles electrons from NADH, via FMN and iron-sulfur (Fe-S) centers, to quinones in the respiratory chain. The immediate electron acceptor for the enzyme in this species is believed to be ubiquinone. Couples the redox reaction to proton translocation (for every two electrons transferred, four hydrogen ions are translocated across the cytoplasmic membrane), and thus conserves the redox energy in a proton gradient. This subunit may bind ubiquinone. The protein is NADH-quinone oxidoreductase subunit H 1 of Cereibacter sphaeroides (strain ATCC 17029 / ATH 2.4.9) (Rhodobacter sphaeroides).